We begin with the raw amino-acid sequence, 65 residues long: Small ribosomal subunit protein bS21 (65 aa).

Belongs to the bacterial ribosomal protein bS21 family.

The protein is Small ribosomal subunit protein bS21 of Geotalea daltonii (strain DSM 22248 / JCM 15807 / FRC-32) (Geobacter daltonii).